The primary structure comprises 1028 residues: Pro-apoptotic serine protease nma111 (1028 aa).

A disordered region spans residues 1 to 46 (MDLNGETSTKRKRSSVAAPAERPAKHLKPESSTLTPGDATPANGTV). A serine protease region spans residues 82-266 (VVSIHFCQTC…AATDYFLPLD (185 aa)). Active-site charge relay system residues include H120, D151, and S233. PDZ domains are found at residues 305–377 (PEWE…QRGG) and 876–957 (VFCG…VTFD). The interval 989-1028 (TVSHDRDRHKDGITPDAANLNPDAMDEVYEEVSDVEPEVD) is disordered. Basic and acidic residues predominate over residues 990 to 1001 (VSHDRDRHKDGI). Positions 1012 to 1028 (AMDEVYEEVSDVEPEVD) are enriched in acidic residues.

The protein belongs to the peptidase S1C family.

The protein resides in the nucleus. In terms of biological role, nuclear serine protease which mediates apoptosis. The chain is Pro-apoptotic serine protease nma111 (nma111) from Neosartorya fischeri (strain ATCC 1020 / DSM 3700 / CBS 544.65 / FGSC A1164 / JCM 1740 / NRRL 181 / WB 181) (Aspergillus fischerianus).